The following is a 161-amino-acid chain: Phosphopantetheine adenylyltransferase (161 aa).

Threonine 10 contributes to the substrate binding site. ATP-binding positions include 10-11 and histidine 18; that span reads TF. Substrate contacts are provided by lysine 42, methionine 74, and arginine 88. Residues 89–91, glutamate 99, and 124–130 contribute to the ATP site; these read GVR and LSFVSSS.

It belongs to the bacterial CoaD family. In terms of assembly, homohexamer. Mg(2+) is required as a cofactor.

The protein localises to the cytoplasm. It carries out the reaction (R)-4'-phosphopantetheine + ATP + H(+) = 3'-dephospho-CoA + diphosphate. It functions in the pathway cofactor biosynthesis; coenzyme A biosynthesis; CoA from (R)-pantothenate: step 4/5. In terms of biological role, reversibly transfers an adenylyl group from ATP to 4'-phosphopantetheine, yielding dephospho-CoA (dPCoA) and pyrophosphate. In Proteus mirabilis (strain HI4320), this protein is Phosphopantetheine adenylyltransferase.